The primary structure comprises 496 residues: MRSALPLVLFSLVALCGRGDCRVANAEEKLMDDLLNKTRYNNLIRPATSSSQLISIQLQLSLAQLISVNEREQIMTTNIWLKQEWTDYRLAWNSSRYEGVNILRIPANRVWLPDIVLYNNADGSYEVSLYTNVVVRSNGSVMWLPPAICKSACKIEVKHFPFDQQNCTLKFRSWTYDHTEIDMVLKMPTASMDDFTPSGEWDIVALPGRRTVNPQDPSYVDVTYDFIIKRKPLFYTINLIIPCVLITSLAILVFYLPSDCGEKMTLCISVLLALTVFLLLISKIVPPTSLNVPLIGKYLMFTMVLVTFSIVTSVCVLNVHHRSPSTHTMAPWVKRCFLHKLPTFLFIKRPRQQPSRAPQSSLARLTKSEATTTTTLAMGPTSSSNLYGNSMYFVNPGLAAPKSPVASDSAGIPRDFRLRSSGRFRQDVQEALEGVSFIAQHMKSDDLDQSVIEDWKYVAMVVDRLFLWVFVVVCVLGTVGLFLPPLFQTHTPSEEP.

The N-terminal stretch at 1–19 (MRSALPLVLFSLVALCGRG) is a signal peptide. The Extracellular segment spans residues 20-236 (DCRVANAEEK…IIKRKPLFYT (217 aa)). Residues Asn36, Asn93, Asn138, and Asn166 are each glycosylated (N-linked (GlcNAc...) asparagine). An intrachain disulfide couples Cys153 to Cys167. Residues 237–257 (INLIIPCVLITSLAILVFYLP) traverse the membrane as a helical segment. The Cytoplasmic portion of the chain corresponds to 258–265 (SDCGEKMT). Glu262 serves as a coordination point for Na(+). A helical transmembrane segment spans residues 266–286 (LCISVLLALTVFLLLISKIVP). At 287-298 (PTSLNVPLIGKY) the chain is on the extracellular side. Residues 299 to 319 (LMFTMVLVTFSIVTSVCVLNV) form a helical membrane-spanning segment. Over 320–464 (HHRSPSTHTM…WKYVAMVVDR (145 aa)) the chain is Cytoplasmic. The helical transmembrane segment at 465 to 485 (LFLWVFVVVCVLGTVGLFLPP) threads the bilayer. At 486–496 (LFQTHTPSEEP) the chain is on the extracellular side.

It belongs to the ligand-gated ion channel (TC 1.A.9) family. Acetylcholine receptor (TC 1.A.9.1) subfamily. Beta-4/CHRNB4 sub-subfamily. In terms of assembly, neuronal AChR is composed of two different types of subunits: alpha and beta. CHRNB4/Beta-4 subunit can be combined to CHRNA2/alpha-2, CHRNA3/alpha-3 or CHRNA4/alpha-4, CHRNA5/alpha-5 and CHRNB3/beta-3 to give rise to functional receptors. Forms stoichiometries such as (CHRNA3)2:(CHRNB4)3 or (CHRNA3:CHRNB4)2:CHRNB3. Interacts with RIC3; which is required for proper folding and assembly. Interacts with LYPD6.

Its subcellular location is the synaptic cell membrane. The protein resides in the cell membrane. The catalysed reaction is Ca(2+)(in) = Ca(2+)(out). It catalyses the reaction K(+)(in) = K(+)(out). The enzyme catalyses Na(+)(in) = Na(+)(out). Functionally, component of neuronal acetylcholine receptors (nAChRs) that function as pentameric, ligand-gated cation channels with high calcium permeability among other activities. nAChRs are excitatory neurotrasnmitter receptors formed by a collection of nAChR subunits known to mediate synaptic transmission in the nervous system and the neuromuscular junction. Each nAchR subunit confers differential attributes to channel properties, including activation, deactivation and desensitization kinetics, pH sensitivity, cation permeability, and binding to allosteric modulators. CHRNB4 forms heteropentameric neuronal acetylcholine receptors with CHRNA2, CHRNA3 and CHRNA4, as well as CHRNA5 and CHRNB3 as accesory subunits. CHRNA3:CHRNB4 being predominant in neurons of the autonomic ganglia, it is known as ganglionic nicotinic receptor. CHRNA3:CHRNB4 or CHRNA3:CHRNA5:CHRNB4 play also an important role in the habenulo-interpeduncular tract, modulating the mesolimbic dopamine system and affecting reward circuits and addiction. Hypothalamic CHRNA3:CHRNB4 nAChR activation by nicotine leads to activation of POMC neurons and a decrease in food intake. The sequence is that of Neuronal acetylcholine receptor subunit beta-4 (CHRNB4) from Bos taurus (Bovine).